We begin with the raw amino-acid sequence, 659 residues long: Crossover junction endonuclease MUS81 (659 aa).

Positions 59–78 match the Helix-hairpin-helix motif 1 motif; that stretch reads KDLSQIKGFGKWMVKLMKGY. One can recognise an ERCC4 domain in the interval 404–503; the sequence is ILILDDREKF…KKLIYILEGD (100 aa). Positions 585–622 match the Helix-hairpin-helix motif 2 motif; it reads TISDVFAIQLMQVPQVTEEIAIAVLDMYPTLLSLASAY.

Belongs to the XPF family. In terms of assembly, forms a heterodimer with EME1A or EME1B. The cofactor is Mg(2+). Requires Ca(2+) as cofactor. As to expression, ubiquitous but preferentially expressed in young flowers buds, notably in anthers.

Its subcellular location is the nucleus. The protein resides in the nucleolus. Interacts with EME1 to form a DNA structure-specific endonuclease with substrate preference for branched DNA structures with a 5'-end at the branch nick. Typical substrates include 3'-flap structures, D-loops, replication forks, nicked Holliday junctions and also intact Holliday junctions with a reduced efficiency. May be required in mitosis for the processing of stalled or collapsed replication fork intermediates. Plays a role in DNA repair and in genotoxic stress-induced homologous recombination (HR) in somatic cells. Mediates a subset of meiotic recombination events that are insensitive to crossover interference. Together with SEND1, essential for the resolution of toxic replication structures to ensure genome stability, and to maintain telomere integrity and replication. The chain is Crossover junction endonuclease MUS81 from Arabidopsis thaliana (Mouse-ear cress).